We begin with the raw amino-acid sequence, 125 residues long: Transmembrane protein 14EP (125 aa).

2 helical membrane passes run 9–29 (VPLYWLGFVYAALAALGGISG) and 81–101 (ILTLWNIYACGFSCRCLLIVS).

The protein belongs to the TMEM14 family.

The protein localises to the membrane. This is Transmembrane protein 14EP (TMEM14EP) from Homo sapiens (Human).